Here is a 49-residue protein sequence, read N- to C-terminus: Large ribosomal subunit protein bL33 (49 aa).

Belongs to the bacterial ribosomal protein bL33 family.

In Thermosipho melanesiensis (strain DSM 12029 / CIP 104789 / BI429), this protein is Large ribosomal subunit protein bL33.